The following is a 173-amino-acid chain: uncharacterized protein (173 aa).

The chain crosses the membrane as a helical span at residues 1–21 (MFIVFYLILIIFIFIYFHVYI).

It to T.pallidum TP0711.

The protein localises to the membrane. This is an uncharacterized protein from Borreliella burgdorferi (strain ATCC 35210 / DSM 4680 / CIP 102532 / B31) (Borrelia burgdorferi).